Consider the following 313-residue polypeptide: MAAPAAGAEPSSDPLVVPRGRLARATDRARSYIALMKLRVVELLLVSTVPVMLLAERGMPSWWLIAVTLLAGTLSAGSANTINCYVDRDIDQLMGRTKRRPLVREVVEPAQALRFGIALGIISTLMFGLLVNWTSAVLSVGAIAFYVFVYTLGLKRRSPSNIVIGGAAGCFPVLIGWSAVTGTVGWPAVLLFAVVFFWTPPHFWALAIRFKDDYAAAGVPMLPVVATLEVVTRRILAYSYLMVAVSLAVAPVADIGLVYLVPAVLLGAWFVAEAHRMAARAKRGEEIKPMRLFHMSITYLTLLFAALAAAALL.

A run of 9 helical transmembrane segments spans residues 33-53, 59-79, 107-127, 129-149, 162-182, 188-208, 212-232, 252-272, and 292-312; these read IALM…PVML, MPSW…AGSA, VEPA…TLMF, LLVN…YVFV, IVIG…AVTG, AVLL…ALAI, DDYA…EVVT, VADI…WFVA, and LFHM…AAAL.

This sequence belongs to the UbiA prenyltransferase family. Protoheme IX farnesyltransferase subfamily.

It localises to the cell membrane. The enzyme catalyses heme b + (2E,6E)-farnesyl diphosphate + H2O = Fe(II)-heme o + diphosphate. Its pathway is porphyrin-containing compound metabolism; heme O biosynthesis; heme O from protoheme: step 1/1. Functionally, converts heme B (protoheme IX) to heme O by substitution of the vinyl group on carbon 2 of heme B porphyrin ring with a hydroxyethyl farnesyl side group. In Parafrankia sp. (strain EAN1pec), this protein is Protoheme IX farnesyltransferase.